Consider the following 118-residue polypeptide: Large ribosomal subunit protein uL18 (118 aa).

Belongs to the universal ribosomal protein uL18 family. In terms of assembly, part of the 50S ribosomal subunit; part of the 5S rRNA/L5/L18/L25 subcomplex. Contacts the 5S and 23S rRNAs.

This is one of the proteins that bind and probably mediate the attachment of the 5S RNA into the large ribosomal subunit, where it forms part of the central protuberance. The polypeptide is Large ribosomal subunit protein uL18 (Campylobacter jejuni subsp. jejuni serotype O:6 (strain 81116 / NCTC 11828)).